The chain runs to 497 residues: Probable malate:quinone oxidoreductase (497 aa).

Belongs to the MQO family. FAD serves as cofactor.

The enzyme catalyses (S)-malate + a quinone = a quinol + oxaloacetate. The protein operates within carbohydrate metabolism; tricarboxylic acid cycle; oxaloacetate from (S)-malate (quinone route): step 1/1. In Rhodopseudomonas palustris (strain ATCC BAA-98 / CGA009), this protein is Probable malate:quinone oxidoreductase.